A 717-amino-acid chain; its full sequence is Pre-mRNA-splicing factor ATP-dependent RNA helicase DEAH10 (717 aa).

Residues 1-29 are disordered; that stretch reads MPSMAQGELKSFVQNSRPNPKSPTVSPFS. A compositionally biased stretch (polar residues) spans 12 to 29; the sequence is FVQNSRPNPKSPTVSPFS. Residues 51-256 form the Helicase ATP-binding domain; sequence VEEVQKNDIL…FGGAKAVHVQ (206 aa). Residue 64–71 participates in ATP binding; sequence GETGSGKT. Residues 162–165 carry the DEAH box motif; the sequence is DEAH. Positions 278-453 constitute a Helicase C-terminal domain; that stretch reads TLVTIFQIHF…NIILQLKALG (176 aa).

Belongs to the DEAD box helicase family. DEAH subfamily. PRP22 sub-subfamily. As to expression, widely expressed but spatially and temporally regulated during development.

The protein localises to the nucleus. Its subcellular location is the nucleolus. It carries out the reaction ATP + H2O = ADP + phosphate + H(+). Its function is as follows. Involved in pre-mRNA splicing. Plays a role during development in processes such as meristem maintenance, leaf morphogenesis and root morphogenesis. This chain is Pre-mRNA-splicing factor ATP-dependent RNA helicase DEAH10, found in Arabidopsis thaliana (Mouse-ear cress).